A 230-amino-acid chain; its full sequence is CASP-like protein 2A2 (230 aa).

The segment at 1 to 23 (MEKKDEGNPPMAVMGSRDENEDV) is disordered. The Cytoplasmic segment spans residues 1-29 (MEKKDEGNPPMAVMGSRDENEDVKSTMRT). Residues 30–50 (AETMLRLVPVALCVSALVVML) form a helical membrane-spanning segment. At 51–71 (KNTQTNDYGSLSYSDLGAFRY) the chain is on the extracellular side. Residues 72 to 92 (LVNANGICAGYSLLSAVIVAM) traverse the membrane as a helical segment. Residues 93–100 (PRAWTMPQ) lie on the Cytoplasmic side of the membrane. A helical membrane pass occupies residues 101-121 (AWTFFLLDQVLTYVILAAGTV). Residues 122–151 (STEVLYLANKGDTSIAWSAACASFGGFCHK) are Extracellular-facing. A helical membrane pass occupies residues 152–172 (ALISTVITFVAVIFYAALSLV). The Cytoplasmic segment spans residues 173-230 (SSYKLFSKYDAPVVTQSGEGIKTVTLGSPPPPPPPPPSNLHLHLHAKLACPAHNNSPN).

This sequence belongs to the Casparian strip membrane proteins (CASP) family. As to quaternary structure, homodimer and heterodimers.

The protein localises to the cell membrane. The polypeptide is CASP-like protein 2A2 (Populus trichocarpa (Western balsam poplar)).